Here is a 403-residue protein sequence, read N- to C-terminus: UPF0229 protein CKR_0568 (403 aa).

Residues 71–109 (SSGVGSGDGSQKKGDRIGKAIKDRDGKGNQGAGNQEGED) are disordered. Positions 80 to 97 (SQKKGDRIGKAIKDRDGK) are enriched in basic and acidic residues.

It belongs to the UPF0229 family.

In Clostridium kluyveri (strain NBRC 12016), this protein is UPF0229 protein CKR_0568.